The primary structure comprises 342 residues: Glucokinase (342 aa).

ATP is bound at residue 7–12 (GDIGGT).

This sequence belongs to the bacterial glucokinase family.

The protein localises to the cytoplasm. The catalysed reaction is D-glucose + ATP = D-glucose 6-phosphate + ADP + H(+). The protein is Glucokinase of Nostoc sp. (strain PCC 7120 / SAG 25.82 / UTEX 2576).